The chain runs to 154 residues: Myoglobin-2 (154 aa).

The region spanning 2–148 is the Globin domain; sequence GLSDGEWQLV…FRKDIATKYK (147 aa). Residue H65 participates in nitrite binding. H65 is an O2 binding site. H94 is a heme b binding site.

This sequence belongs to the globin family. Monomeric.

It localises to the cytoplasm. The protein resides in the sarcoplasm. It carries out the reaction Fe(III)-heme b-[protein] + nitric oxide + H2O = Fe(II)-heme b-[protein] + nitrite + 2 H(+). It catalyses the reaction H2O2 + AH2 = A + 2 H2O. Functionally, monomeric heme protein which primary function is to store oxygen and facilitate its diffusion within muscle tissues. Reversibly binds oxygen through a pentacoordinated heme iron and enables its timely and efficient release as needed during periods of heightened demand. Depending on the oxidative conditions of tissues and cells, and in addition to its ability to bind oxygen, it also has a nitrite reductase activity whereby it regulates the production of bioactive nitric oxide. Under stress conditions, like hypoxia and anoxia, it also protects cells against reactive oxygen species thanks to its pseudoperoxidase activity. In Stenella attenuata (Pantropical spotted dolphin), this protein is Myoglobin-2 (MB2).